Reading from the N-terminus, the 57-residue chain is UPF0391 membrane protein RPE_2138 (57 aa).

A run of 2 helical transmembrane segments spans residues 4-24 and 30-50; these read WVVT…GGIA and IAKI…VIGL.

This sequence belongs to the UPF0391 family.

The protein resides in the cell membrane. This chain is UPF0391 membrane protein RPE_2138, found in Rhodopseudomonas palustris (strain BisA53).